Reading from the N-terminus, the 305-residue chain is HPr kinase/phosphorylase (305 aa).

Residues histidine 138 and lysine 159 contribute to the active site. Residue 153–160 participates in ATP binding; it reads GESGIGKS. Serine 160 serves as a coordination point for Mg(2+). Catalysis depends on aspartate 177, which acts as the Proton acceptor; for phosphorylation activity. Proton donor; for dephosphorylation activity. The interval 201-210 is important for the catalytic mechanism of both phosphorylation and dephosphorylation; sequence IEIRGIGILD. Mg(2+) is bound at residue glutamate 202. Arginine 243 is an active-site residue. The important for the catalytic mechanism of dephosphorylation stretch occupies residues 264–269; that stretch reads PVRPGR.

This sequence belongs to the HPrK/P family. Homohexamer. The cofactor is Mg(2+).

The catalysed reaction is [HPr protein]-L-serine + ATP = [HPr protein]-O-phospho-L-serine + ADP + H(+). The enzyme catalyses [HPr protein]-O-phospho-L-serine + phosphate + H(+) = [HPr protein]-L-serine + diphosphate. Its function is as follows. Catalyzes the ATP- as well as the pyrophosphate-dependent phosphorylation of a specific serine residue in HPr, a phosphocarrier protein of the phosphoenolpyruvate-dependent sugar phosphotransferase system (PTS). HprK/P also catalyzes the pyrophosphate-producing, inorganic phosphate-dependent dephosphorylation (phosphorolysis) of seryl-phosphorylated HPr (P-Ser-HPr). The two antagonistic activities of HprK/P are regulated by several intracellular metabolites, which change their concentration in response to the absence or presence of rapidly metabolisable carbon sources (glucose, fructose, etc.) in the growth medium. Therefore, by controlling the phosphorylation state of HPr, HPrK/P is a sensor enzyme that plays a major role in the regulation of carbon metabolism and sugar transport: it mediates carbon catabolite repression (CCR), and regulates PTS-catalyzed carbohydrate uptake and inducer exclusion. The protein is HPr kinase/phosphorylase of Caldanaerobacter subterraneus subsp. tengcongensis (strain DSM 15242 / JCM 11007 / NBRC 100824 / MB4) (Thermoanaerobacter tengcongensis).